Reading from the N-terminus, the 297-residue chain is N-acetylneuraminate lyase (297 aa).

Residues serine 47 and threonine 48 each contribute to the aceneuramate site. Residue tyrosine 137 is the Proton donor of the active site. Lysine 165 acts as the Schiff-base intermediate with substrate in catalysis. Aceneuramate contacts are provided by threonine 167, glycine 189, aspartate 191, glutamate 192, and serine 208.

It belongs to the DapA family. NanA subfamily. In terms of assembly, homotetramer.

It is found in the cytoplasm. The enzyme catalyses aceneuramate = aldehydo-N-acetyl-D-mannosamine + pyruvate. It participates in amino-sugar metabolism; N-acetylneuraminate degradation; D-fructose 6-phosphate from N-acetylneuraminate: step 1/5. Its function is as follows. Catalyzes the reversible aldol cleavage of N-acetylneuraminic acid (sialic acid; Neu5Ac) to form pyruvate and N-acetylmannosamine (ManNAc) via a Schiff base intermediate. The chain is N-acetylneuraminate lyase from Escherichia coli (strain SMS-3-5 / SECEC).